The primary structure comprises 352 residues: Guanidino acid hydrolase, mitochondrial (352 aa).

Residues 1 to 35 constitute a mitochondrion transit peptide; sequence MLRLLASGCARGPGPGVGARPAAGLFHPGRRQSRQ. Residues 11 to 49 are disordered; it reads RGPGPGVGARPAAGLFHPGRRQSRQASDAPRNQPPSPEF. Mn(2+) is bound by residues histidine 162, aspartate 185, histidine 187, and aspartate 189. Residue lysine 193 is modified to N6-acetyllysine. N6-acetyllysine; alternate is present on lysine 217. Lysine 217 carries the post-translational modification N6-succinyllysine; alternate. The Mn(2+) site is built by aspartate 276 and aspartate 278.

Belongs to the ureohydrolase superfamily. Arginase family. The cofactor is Mn(2+). In terms of tissue distribution, highly expressed in liver and kidney. Also found in skeletal muscle, fetal liver, brain, testis, skin and the gastrointestinal tract. Within brain, expression is higher in the cerebral cortex with lower levels in the medulla and spinal cord.

The protein localises to the mitochondrion. It catalyses the reaction 3-guanidinopropanoate + H2O = urea + beta-alanine. The catalysed reaction is 4-guanidinobutanoate + H2O = urea + 4-aminobutanoate. It carries out the reaction taurocyamine + H2O = urea + taurine. The enzyme catalyses L-arginine + H2O = urea + L-ornithine. It participates in nitrogen metabolism; urea cycle; L-ornithine and urea from L-arginine: step 1/1. In terms of biological role, hydrolyzes linear guanidino acids to form urea and the corresponding amines. Displays specificity for substrates having a negatively charged head group and short chains including taurocyamine, guanidino propanoic and butanoic acids. May protect cells by detoxifying potentially harmful amounts of guanidino acids. Metabolizes L-arginine with low efficiency. The protein is Guanidino acid hydrolase, mitochondrial (AGMAT) of Homo sapiens (Human).